The chain runs to 466 residues: Probable Xaa-Pro aminopeptidase pepP (466 aa).

Mn(2+) is bound by residues aspartate 264, aspartate 275, glutamate 398, and glutamate 438.

The protein belongs to the peptidase M24B family. Mn(2+) is required as a cofactor.

The enzyme catalyses Release of any N-terminal amino acid, including proline, that is linked to proline, even from a dipeptide or tripeptide.. In terms of biological role, catalyzes the removal of a penultimate prolyl residue from the N-termini of peptides. This Aspergillus clavatus (strain ATCC 1007 / CBS 513.65 / DSM 816 / NCTC 3887 / NRRL 1 / QM 1276 / 107) protein is Probable Xaa-Pro aminopeptidase pepP (pepP).